Reading from the N-terminus, the 198-residue chain is MKIIIATHNPHKTEEIKNFFKGYPVEIYSMADLGIKEDIEETGDTIEENALIKARFLKEKVDGIVIADDTGLFVEHLNGQPGVYSARFAGENATYEDNNKKLLKLLEGVPYEKRKAYFKTVIAVVEREKETLLEGKLEGHILDHPRGKNGFGYDPVFYVDNLGKSLAELTMEEKNKISHRADALMKLKNYILKRLEEK.

Residue 7–12 (THNPHK) coordinates substrate. 2 residues coordinate Mg(2+): glutamate 40 and aspartate 69. The active-site Proton acceptor is aspartate 69. Residues threonine 70, 151 to 154 (FGYD), lysine 174, and 179 to 180 (HR) each bind substrate.

It belongs to the HAM1 NTPase family. Homodimer. The cofactor is Mg(2+).

It carries out the reaction XTP + H2O = XMP + diphosphate + H(+). The enzyme catalyses dITP + H2O = dIMP + diphosphate + H(+). The catalysed reaction is ITP + H2O = IMP + diphosphate + H(+). Pyrophosphatase that catalyzes the hydrolysis of nucleoside triphosphates to their monophosphate derivatives, with a high preference for the non-canonical purine nucleotides XTP (xanthosine triphosphate), dITP (deoxyinosine triphosphate) and ITP. Seems to function as a house-cleaning enzyme that removes non-canonical purine nucleotides from the nucleotide pool, thus preventing their incorporation into DNA/RNA and avoiding chromosomal lesions. The protein is dITP/XTP pyrophosphatase of Thermoanaerobacter sp. (strain X514).